A 550-amino-acid chain; its full sequence is CTP synthase (550 aa).

The amidoligase domain stretch occupies residues 1–270 (MTKFVFVTGG…DRLICEELRL (270 aa)). S13 is a binding site for CTP. A UTP-binding site is contributed by S13. Residues 14–19 (SLGKGI) and D71 each bind ATP. D71 and E144 together coordinate Mg(2+). CTP-binding positions include 151 to 153 (DIE), 191 to 196 (KTKPTQ), and K227. Residues 191-196 (KTKPTQ) and K227 each bind UTP. Residues 295 to 547 (TIGMVGKYVD…VEAALAGQQR (253 aa)) enclose the Glutamine amidotransferase type-1 domain. G356 is an L-glutamine binding site. C383 acts as the Nucleophile; for glutamine hydrolysis in catalysis. Residues 384–387 (LGMQ), E407, and R473 each bind L-glutamine. Residues H520 and E522 contribute to the active site.

It belongs to the CTP synthase family. As to quaternary structure, homotetramer.

It catalyses the reaction UTP + L-glutamine + ATP + H2O = CTP + L-glutamate + ADP + phosphate + 2 H(+). The enzyme catalyses L-glutamine + H2O = L-glutamate + NH4(+). It carries out the reaction UTP + NH4(+) + ATP = CTP + ADP + phosphate + 2 H(+). The protein operates within pyrimidine metabolism; CTP biosynthesis via de novo pathway; CTP from UDP: step 2/2. With respect to regulation, allosterically activated by GTP, when glutamine is the substrate; GTP has no effect on the reaction when ammonia is the substrate. The allosteric effector GTP functions by stabilizing the protein conformation that binds the tetrahedral intermediate(s) formed during glutamine hydrolysis. Inhibited by the product CTP, via allosteric rather than competitive inhibition. Catalyzes the ATP-dependent amination of UTP to CTP with either L-glutamine or ammonia as the source of nitrogen. Regulates intracellular CTP levels through interactions with the four ribonucleotide triphosphates. The sequence is that of CTP synthase from Cupriavidus pinatubonensis (strain JMP 134 / LMG 1197) (Cupriavidus necator (strain JMP 134)).